The primary structure comprises 128 residues: Keratin-associated protein 2-1 (128 aa).

A 10 X 5 AA repeats of C-C-[CDPQRWG]-[APRS]-[CIPSTVD] region spans residues 5–112 (CCGSTFSSLS…SVQSPCCRPP (108 aa)).

This sequence belongs to the KRTAP type 2 family. In terms of assembly, interacts with hair keratins.

In terms of biological role, in the hair cortex, hair keratin intermediate filaments are embedded in an interfilamentous matrix, consisting of hair keratin-associated proteins (KRTAP), which are essential for the formation of a rigid and resistant hair shaft through their extensive disulfide bond cross-linking with abundant cysteine residues of hair keratins. The matrix proteins include the high-sulfur and high-glycine-tyrosine keratins. This chain is Keratin-associated protein 2-1 (KRTAP2-1), found in Homo sapiens (Human).